Reading from the N-terminus, the 257-residue chain is UPF0246 protein ACICU_02469 (257 aa).

This sequence belongs to the UPF0246 family.

The sequence is that of UPF0246 protein ACICU_02469 from Acinetobacter baumannii (strain ACICU).